The chain runs to 78 residues: Large ribosomal subunit protein bL31 (78 aa).

Residues C16, C18, C38, and C41 each contribute to the Zn(2+) site.

This sequence belongs to the bacterial ribosomal protein bL31 family. Type A subfamily. As to quaternary structure, part of the 50S ribosomal subunit. The cofactor is Zn(2+).

Functionally, binds the 23S rRNA. The protein is Large ribosomal subunit protein bL31 of Frankia casuarinae (strain DSM 45818 / CECT 9043 / HFP020203 / CcI3).